A 371-amino-acid chain; its full sequence is MEPIWAVGLMTGTVLDGNIDVALIKTDGERIDDFGTYRLMPYPQSIRSLLEETLTAARAWNFVGPEPAIFRKAEEALTRAQSAAVKELVEGYGMTMADIGVVGFHGQTVLHRAPQVGRLGQTRQLGDGELMHSLLSTKVAYDFRSADMRAGGQGAPLAAAYHTALMRSAGASGEVAVLNLGGVANITWWDGADNVVAFDTGPANAPLNDFIKSKGLGDMDRDGALGRAGTVDEARLAKLLQHPYLTKPYPKSLDRFDFGAAMADGLNAEDGAALLTAFTAGAVGKALDLLPTRPKKLVVSGGGRHNPTMMAMLASRAGVEVVQAESLGWSGDAVEAECFAFLAVRVLRGMPISFPSTTGAPQPMRGGKLAG.

Position 12-20 (12-20 (GTVLDGNID)) interacts with ATP.

This sequence belongs to the anhydro-N-acetylmuramic acid kinase family.

The catalysed reaction is 1,6-anhydro-N-acetyl-beta-muramate + ATP + H2O = N-acetyl-D-muramate 6-phosphate + ADP + H(+). It participates in amino-sugar metabolism; 1,6-anhydro-N-acetylmuramate degradation. It functions in the pathway cell wall biogenesis; peptidoglycan recycling. In terms of biological role, catalyzes the specific phosphorylation of 1,6-anhydro-N-acetylmuramic acid (anhMurNAc) with the simultaneous cleavage of the 1,6-anhydro ring, generating MurNAc-6-P. Is required for the utilization of anhMurNAc either imported from the medium or derived from its own cell wall murein, and thus plays a role in cell wall recycling. The chain is Anhydro-N-acetylmuramic acid kinase from Mesorhizobium japonicum (strain LMG 29417 / CECT 9101 / MAFF 303099) (Mesorhizobium loti (strain MAFF 303099)).